The primary structure comprises 502 residues: Aspartyl/glutamyl-tRNA(Asn/Gln) amidotransferase subunit B (502 aa).

It belongs to the GatB/GatE family. GatB subfamily. Heterotrimer of A, B and C subunits.

It catalyses the reaction L-glutamyl-tRNA(Gln) + L-glutamine + ATP + H2O = L-glutaminyl-tRNA(Gln) + L-glutamate + ADP + phosphate + H(+). The catalysed reaction is L-aspartyl-tRNA(Asn) + L-glutamine + ATP + H2O = L-asparaginyl-tRNA(Asn) + L-glutamate + ADP + phosphate + 2 H(+). Allows the formation of correctly charged Asn-tRNA(Asn) or Gln-tRNA(Gln) through the transamidation of misacylated Asp-tRNA(Asn) or Glu-tRNA(Gln) in organisms which lack either or both of asparaginyl-tRNA or glutaminyl-tRNA synthetases. The reaction takes place in the presence of glutamine and ATP through an activated phospho-Asp-tRNA(Asn) or phospho-Glu-tRNA(Gln). The sequence is that of Aspartyl/glutamyl-tRNA(Asn/Gln) amidotransferase subunit B from Ruegeria sp. (strain TM1040) (Silicibacter sp.).